A 308-amino-acid polypeptide reads, in one-letter code: Probable manganese-dependent inorganic pyrophosphatase (308 aa).

Mn(2+) contacts are provided by histidine 9, aspartate 13, aspartate 15, aspartate 75, histidine 97, and aspartate 149.

This sequence belongs to the PPase class C family. Requires Mn(2+) as cofactor.

The protein localises to the cytoplasm. It catalyses the reaction diphosphate + H2O = 2 phosphate + H(+). The protein is Probable manganese-dependent inorganic pyrophosphatase of Listeria monocytogenes serotype 4b (strain CLIP80459).